Reading from the N-terminus, the 310-residue chain is Malate dehydrogenase (310 aa).

Residues 7 to 13 (GAAGGIG) and Asp-34 contribute to the NAD(+) site. Arg-81 and Arg-87 together coordinate substrate. Residues Asn-94 and 117–119 (ITN) each bind NAD(+). 2 residues coordinate substrate: Asn-119 and Arg-153. His-177 functions as the Proton acceptor in the catalytic mechanism. Met-227 contributes to the NAD(+) binding site.

The protein belongs to the LDH/MDH superfamily. MDH type 1 family. As to quaternary structure, homodimer.

It carries out the reaction (S)-malate + NAD(+) = oxaloacetate + NADH + H(+). In terms of biological role, catalyzes the reversible oxidation of malate to oxaloacetate. The polypeptide is Malate dehydrogenase (Pseudoalteromonas translucida (strain TAC 125)).